The primary structure comprises 300 residues: Soluble inorganic pyrophosphatase 6, chloroplastic (300 aa).

Residues Met1–Lys66 constitute a chloroplast transit peptide. Arg140 lines the diphosphate pocket. Tyr142 (proton donor) is an active-site residue. Mg(2+) is bound by residues Asp173, Asp178, and Asp210.

This sequence belongs to the PPase family. The cofactor is Mg(2+). As to expression, expressed in all tissues tested. Highest expression in flowers, leaves and roots. Lower levels of expression in siliques, stems, ovary, stigma and pollen.

Its subcellular location is the plastid. It is found in the chloroplast stroma. It carries out the reaction diphosphate + H2O = 2 phosphate + H(+). Its activity is regulated as follows. Inhibited by NaF. This chain is Soluble inorganic pyrophosphatase 6, chloroplastic, found in Arabidopsis thaliana (Mouse-ear cress).